The sequence spans 377 residues: Geranylgeranyl transferase type-1 subunit beta (377 aa).

4 PFTB repeats span residues 144-186, 193-234, 245-284, and 291-333; these read KEAC…YMLN, MKKA…CLMG, LNRI…KLLK, and FEKN…SLME. Geranylgeranyl diphosphate contacts are provided by residues 219-221 and 263-266; these read HGG and RPNK. Zn(2+) contacts are provided by D269 and C271. 272 to 275 serves as a coordination point for geranylgeranyl diphosphate; that stretch reads YSFW. Zn(2+) is bound at residue H321.

This sequence belongs to the protein prenyltransferase subunit beta family. As to quaternary structure, heterodimer of FNTA and PGGT1B. PGGT1B mediates interaction with substrate peptides. Zn(2+) is required as a cofactor. The cofactor is Mg(2+).

The catalysed reaction is geranylgeranyl diphosphate + L-cysteinyl-[protein] = S-geranylgeranyl-L-cysteinyl-[protein] + diphosphate. Catalyzes the transfer of a geranylgeranyl moiety from geranylgeranyl diphosphate to a cysteine at the fourth position from the C-terminus of proteins with the C-terminal sequence Cys-aliphatic-aliphatic-X. Known substrates include RAC1, RAC2, RAP1A and RAP1B. This chain is Geranylgeranyl transferase type-1 subunit beta (Pggt1b), found in Rattus norvegicus (Rat).